Consider the following 34-residue polypeptide: Corticostatin-2 (34 aa).

Disulfide bonds link C3–C32, C5–C21, and C11–C31.

Belongs to the alpha-defensin family.

Its subcellular location is the secreted. Its function is as follows. Microbicidal activity and inhibits corticotropin (ACTH) stimulated corticosterone production. The chain is Corticostatin-2 from Oryctolagus cuniculus (Rabbit).